The primary structure comprises 79 residues: uncharacterized protein (79 aa).

Residues 1 to 24 (MKMNPCTVILCKSLFFFCLFQVDC) form the signal peptide. Asn-33 is a glycosylation site (N-linked (GlcNAc...) asparagine).

The protein resides in the secreted. This is an uncharacterized protein from Saccharomyces cerevisiae (strain ATCC 204508 / S288c) (Baker's yeast).